The primary structure comprises 226 residues: Large ribosomal subunit protein uL1 (226 aa).

This sequence belongs to the universal ribosomal protein uL1 family. As to quaternary structure, part of the 50S ribosomal subunit.

In terms of biological role, binds directly to 23S rRNA. The L1 stalk is quite mobile in the ribosome, and is involved in E site tRNA release. Functionally, protein L1 is also a translational repressor protein, it controls the translation of the L11 operon by binding to its mRNA. The chain is Large ribosomal subunit protein uL1 from Mycoplasma mycoides subsp. mycoides SC (strain CCUG 32753 / NCTC 10114 / PG1).